The following is a 71-amino-acid chain: MFTMKKSLLLIFFLGTINLSLCEEERNADEDEKRDGDDESDVEVQKRFMGTALKIAANVLPAAFCKIFKKC.

Positions 1-22 (MFTMKKSLLLIFFLGTINLSLC) are cleaved as a signal peptide. The propeptide at 23–45 (EEERNADEDEKRDGDDESDVEVQ) is removed in mature form. Cys65 and Cys71 are disulfide-bonded.

This sequence belongs to the frog skin active peptide (FSAP) family. Brevinin subfamily. Expressed by the skin glands.

The protein resides in the secreted. Antimicrobial peptide. Active against a variety of Gram-negative and Gram-positive bacterial strains. Active against fungus C.glabrata 090902 and C.albicans ATCC 10231. Shows hemolytic activity against human erythrocytes. The sequence is that of Brevinin-1SN2 from Sylvirana spinulosa (Fine-spined frog).